Reading from the N-terminus, the 989-residue chain is Autotransporter adhesin/invasin TibA (989 aa).

The N-terminal stretch at 1–54 (MNKVYNTVWNESTGTWVVTSELTRKGGLRPRQIKRTVLAGLIAGLLMPSMPALA) is a signal peptide. Ser-74, Ser-86, Ser-93, Ser-94, Ser-97, Ser-100, Ser-112, Ser-113, Ser-116, Ser-119, Ser-124, Ser-131, Ser-132, and Ser-135 each carry an O-alpha-linked (D-glycero-D-manno-heptose) serine glycan. Repeat copies occupy residues 82-100 (TTIN…SATS), 101-119 (TTIN…SATS), 120-138 (STIN…SATN), 139-157 (TTVN…SAMG), 158-176 (TIIN…SATS), 177-195 (ASVT…IVKA), 196-214 (TSVN…SATD), 215-233 (TVLN…SAAK), 234-251 (TTIN…SATG), 252-270 (TSIY…SATN), 271-289 (TTVY…NVTE), and 290-308 (TTIT…SASK). The 12 X 19 AA approximate repeats stretch occupies residues 82 to 308 (TTINSGGKQY…QVEAGGSASK (227 aa)). Positions 110–123 (HVSSGGSATSSTIN) are enriched in polar residues. The disordered stretch occupies residues 110–146 (HVSSGGSATSSTINSGGHQHVSSGGSATNTTVNNGGR). Over residues 124–135 (SGGHQHVSSGGS) the composition is skewed to low complexity. Residues 136–146 (ATNTTVNNGGR) are compositionally biased toward polar residues. Ser-151, Ser-154, Ser-162, Ser-170, Ser-176, Ser-181, Ser-188, Ser-189, Ser-200, Ser-226, Ser-227, Ser-230, Ser-238, Ser-248, Ser-263, Ser-264, Ser-275, Ser-294, Ser-305, Ser-313, and Ser-322 each carry an O-alpha-linked (D-glycero-D-manno-heptose) serine glycan. The segment at 623-686 (WYLKADTPPP…GTSSSPVRRT (64 aa)) is disordered. A compositionally biased stretch (pro residues) spans 629-638 (TPPPVTPPTN). Tandem repeats lie at residues 639-643 (PDADN), 644-648 (PDAGN), 649-653 (PDAGN), 654-658 (PDAGN), 659-663 (PDAGN), 664-668 (PDAGK), 669-673 (PGTGK), and 674-678 (PDAGT). The segment covering 639 to 667 (PDADNPDAGNPDAGNPDAGNPDAGNPDAG) has biased composition (low complexity). Residues 639–678 (PDADNPDAGNPDAGNPDAGNPDAGNPDAGKPGTGKPDAGT) are 8 X 5 AA repeats of P-[DG]-[AGT]-[DGA]-[NKT]. Positions 721–989 (NTRAPGGVWG…TGGVGFRINF (269 aa)) constitute an Autotransporter domain.

In terms of assembly, homohexamer. Glycosylated by TibC. Glycosylation is required for adhesion to and invasion of host cells. Glycosylation is dispensable for bacterial autoaggregation and biofilm formation.

Its subcellular location is the cell outer membrane. In terms of biological role, mediates both adhesion to and invasion of human intestine epithelial cells. Also mediates bacterial cell aggregation via intercellular TibA-TibA interaction. Enhances biofilm formation. The sequence is that of Autotransporter adhesin/invasin TibA from Escherichia coli O78:H11 (strain H10407 / ETEC).